The sequence spans 407 residues: Peptidase T (407 aa).

Residue H81 participates in Zn(2+) binding. Residue D83 is part of the active site. D142 lines the Zn(2+) pocket. E176 (proton acceptor) is an active-site residue. Positions 177, 199, and 381 each coordinate Zn(2+).

It belongs to the peptidase M20B family. Zn(2+) serves as cofactor.

Its subcellular location is the cytoplasm. It carries out the reaction Release of the N-terminal residue from a tripeptide.. Cleaves the N-terminal amino acid of tripeptides. This is Peptidase T from Streptococcus pneumoniae (strain Taiwan19F-14).